We begin with the raw amino-acid sequence, 1343 residues long: Protein cordon-bleu (1343 aa).

Disordered regions lie at residues 1 to 51 (MNLG…GDCK), 301 to 479 (KVEL…PAAE), 522 to 613 (VSVA…NGYE), 733 to 808 (IDKP…TRVL), 1056 to 1077 (EKPT…KSLD), and 1105 to 1148 (INNF…NVFG). Residues 20-30 (APPPPRPPQPA) are compositionally biased toward pro residues. The KKRRAP 1 motif lies at 305–310 (KKRRAP). The segment covering 324 to 335 (SQISLGSPSSHN) has biased composition (polar residues). Positions 338 to 343 (KKRKAP) match the KKRRAP 2 motif. Residues 343–354 (PAPPPTPPPSTP) show a composition bias toward pro residues. The segment covering 390 to 400 (DLSHSIEDSEP) has biased composition (basic and acidic residues). The segment covering 406–422 (SSSSGDDAAAVGSSSSS) has biased composition (low complexity). The segment covering 445 to 460 (PEPKPEYEPELKKEAS) has biased composition (basic and acidic residues). The span at 552 to 573 (ERMQSVSPMDIMSLNSDSTLPV) shows a compositional bias: polar residues. A compositionally biased stretch (basic and acidic residues) spans 746–757 (PSQDAKITDNME). The span at 773-789 (VELTSQKDTVLQKSQSF) shows a compositional bias: polar residues. The segment covering 1105-1122 (INNFPDTSSARQTPTDTT) has biased composition (polar residues). Residues 1128-1137 (KKPELHKSEI) show a composition bias toward basic and acidic residues. WH2 domains are found at residues 1167–1187 (IHSS…LRKV) and 1207–1227 (ERSA…LKKT). Positions 1246-1297 (NVHTEVISPRPTSPDFVPPLPPSFSPPPPPPPPLAPAKPPVVLPPGGNPEAA) are disordered. Residues 1261-1292 (FVPPLPPSFSPPPPPPPPLAPAKPPVVLPPGG) are compositionally biased toward pro residues. The WH2 3 domain maps to 1297–1317 (AREALLEAIRSGSGAQQLRKV).

Interacts with pacsin1.

It is found in the cell membrane. The protein resides in the cytoplasm. It localises to the cytoskeleton. Its subcellular location is the cell projection. The protein localises to the ruffle. It is found in the cytosol. Plays an important role in the reorganization of the actin cytoskeleton. Binds to and sequesters actin monomers (G actin). Nucleates actin polymerization by assembling three actin monomers in cross-filament orientation and thereby promotes growth of actin filaments at the barbed end. Can also mediate actin depolymerization at barbed ends and severing of actin filaments. Promotes formation of cell ruffles. Regulates neuron morphogenesis and increases branching of axons and dendrites. Required for normal embryonic development, including normal development of laterality, normal body size and shape, as well as normal brain, heart and kidney development. Required for normal development of stereocilia and kinocilia in sensory hair cells of neuromasts in the posterior lateral line organ, and thus also for balance keeping and normal swimming behavior. The chain is Protein cordon-bleu (cobl) from Danio rerio (Zebrafish).